A 628-amino-acid chain; its full sequence is tRNA uridine 5-carboxymethylaminomethyl modification enzyme MnmG (628 aa).

13 to 18 (GAGHAG) contacts FAD. NAD(+) is bound at residue 273–287 (GPRYCPSIEDKIVRF).

Belongs to the MnmG family. As to quaternary structure, homodimer. Heterotetramer of two MnmE and two MnmG subunits. FAD is required as a cofactor.

It is found in the cytoplasm. NAD-binding protein involved in the addition of a carboxymethylaminomethyl (cmnm) group at the wobble position (U34) of certain tRNAs, forming tRNA-cmnm(5)s(2)U34. The polypeptide is tRNA uridine 5-carboxymethylaminomethyl modification enzyme MnmG (Buchnera aphidicola subsp. Acyrthosiphon pisum (strain Tuc7)).